We begin with the raw amino-acid sequence, 163 residues long: Protein YtsP (163 aa).

It belongs to the free Met sulfoxide reductase family.

This chain is Protein YtsP (ytsP), found in Bacillus subtilis (strain 168).